A 207-amino-acid polypeptide reads, in one-letter code: Thiamine-phosphate synthase (207 aa).

4-amino-2-methyl-5-(diphosphooxymethyl)pyrimidine is bound by residues 36 to 40 (QLRIK) and Asp-68. 2 residues coordinate Mg(2+): Asp-69 and Asp-88. Ser-106 contributes to the 4-amino-2-methyl-5-(diphosphooxymethyl)pyrimidine binding site. 132–134 (TQT) contacts 2-[(2R,5Z)-2-carboxy-4-methylthiazol-5(2H)-ylidene]ethyl phosphate. 4-amino-2-methyl-5-(diphosphooxymethyl)pyrimidine is bound at residue Lys-135. 2-[(2R,5Z)-2-carboxy-4-methylthiazol-5(2H)-ylidene]ethyl phosphate is bound by residues Gly-162 and 182-183 (VS).

Belongs to the thiamine-phosphate synthase family. The cofactor is Mg(2+).

It catalyses the reaction 2-[(2R,5Z)-2-carboxy-4-methylthiazol-5(2H)-ylidene]ethyl phosphate + 4-amino-2-methyl-5-(diphosphooxymethyl)pyrimidine + 2 H(+) = thiamine phosphate + CO2 + diphosphate. The enzyme catalyses 2-(2-carboxy-4-methylthiazol-5-yl)ethyl phosphate + 4-amino-2-methyl-5-(diphosphooxymethyl)pyrimidine + 2 H(+) = thiamine phosphate + CO2 + diphosphate. The catalysed reaction is 4-methyl-5-(2-phosphooxyethyl)-thiazole + 4-amino-2-methyl-5-(diphosphooxymethyl)pyrimidine + H(+) = thiamine phosphate + diphosphate. Its pathway is cofactor biosynthesis; thiamine diphosphate biosynthesis; thiamine phosphate from 4-amino-2-methyl-5-diphosphomethylpyrimidine and 4-methyl-5-(2-phosphoethyl)-thiazole: step 1/1. Its function is as follows. Condenses 4-methyl-5-(beta-hydroxyethyl)thiazole monophosphate (THZ-P) and 2-methyl-4-amino-5-hydroxymethyl pyrimidine pyrophosphate (HMP-PP) to form thiamine monophosphate (TMP). The polypeptide is Thiamine-phosphate synthase (Pyrococcus horikoshii (strain ATCC 700860 / DSM 12428 / JCM 9974 / NBRC 100139 / OT-3)).